A 199-amino-acid polypeptide reads, in one-letter code: Small ribosomal subunit protein uS5 (199 aa).

Positions 1–29 (MATAGRRGGAASERRERRESRRQEASPEK) are disordered. A compositionally biased stretch (basic and acidic residues) spans 12–27 (SERRERRESRRQEASP). Residues 32–95 (FLERVVTINR…EEAKKHFFTV (64 aa)) form the S5 DRBM domain.

The protein belongs to the universal ribosomal protein uS5 family. As to quaternary structure, part of the 30S ribosomal subunit. Contacts proteins S4 and S8.

In terms of biological role, with S4 and S12 plays an important role in translational accuracy. Located at the back of the 30S subunit body where it stabilizes the conformation of the head with respect to the body. In Acidothermus cellulolyticus (strain ATCC 43068 / DSM 8971 / 11B), this protein is Small ribosomal subunit protein uS5.